The sequence spans 150 residues: Large ribosomal subunit protein bL9 (150 aa).

This sequence belongs to the bacterial ribosomal protein bL9 family.

Binds to the 23S rRNA. The chain is Large ribosomal subunit protein bL9 from Streptococcus pyogenes serotype M2 (strain MGAS10270).